The primary structure comprises 343 residues: Heat-inducible transcription repressor HrcA (343 aa).

This sequence belongs to the HrcA family.

Negative regulator of class I heat shock genes (grpE-dnaK-dnaJ and groELS operons). Prevents heat-shock induction of these operons. The chain is Heat-inducible transcription repressor HrcA from Bacillus pumilus (strain SAFR-032).